The sequence spans 248 residues: Ribonuclease PH (248 aa).

Phosphate is bound by residues Arg-86 and 124-126 (GTR).

This sequence belongs to the RNase PH family. As to quaternary structure, homohexameric ring arranged as a trimer of dimers.

It carries out the reaction tRNA(n+1) + phosphate = tRNA(n) + a ribonucleoside 5'-diphosphate. Phosphorolytic 3'-5' exoribonuclease that plays an important role in tRNA 3'-end maturation. Removes nucleotide residues following the 3'-CCA terminus of tRNAs; can also add nucleotides to the ends of RNA molecules by using nucleoside diphosphates as substrates, but this may not be physiologically important. Probably plays a role in initiation of 16S rRNA degradation (leading to ribosome degradation) during starvation. The polypeptide is Ribonuclease PH (Listeria welshimeri serovar 6b (strain ATCC 35897 / DSM 20650 / CCUG 15529 / CIP 8149 / NCTC 11857 / SLCC 5334 / V8)).